The chain runs to 152 residues: Ubiquitin-activating enzyme E1 Y (152 aa).

Catalysis depends on Cys-51, which acts as the Glycyl thioester intermediate.

This sequence belongs to the ubiquitin-activating E1 family. Monomer.

The catalysed reaction is ATP + ubiquitin + [E1 ubiquitin-activating enzyme]-L-cysteine = AMP + diphosphate + S-ubiquitinyl-[E1 ubiquitin-activating enzyme]-L-cysteine.. It participates in protein modification; protein ubiquitination. In terms of biological role, activates ubiquitin by first adenylating its C-terminal glycine residue with ATP, and thereafter linking this residue to the side chain of a cysteine residue in E1, yielding a ubiquitin-E1 thioester and free AMP. The Y chromosome form could be involved in the survival and proliferation of differentiating spermatogonia. The sequence is that of Ubiquitin-activating enzyme E1 Y (UBE1Y) from Osphranter rufus (Red kangaroo).